Consider the following 255-residue polypeptide: Pyrroloquinoline-quinone synthase (255 aa).

It belongs to the PqqC family.

It carries out the reaction 6-(2-amino-2-carboxyethyl)-7,8-dioxo-1,2,3,4,7,8-hexahydroquinoline-2,4-dicarboxylate + 3 O2 = pyrroloquinoline quinone + 2 H2O2 + 2 H2O + H(+). It functions in the pathway cofactor biosynthesis; pyrroloquinoline quinone biosynthesis. Its function is as follows. Ring cyclization and eight-electron oxidation of 3a-(2-amino-2-carboxyethyl)-4,5-dioxo-4,5,6,7,8,9-hexahydroquinoline-7,9-dicarboxylic-acid to PQQ. In Cereibacter sphaeroides (strain KD131 / KCTC 12085) (Rhodobacter sphaeroides), this protein is Pyrroloquinoline-quinone synthase.